The sequence spans 287 residues: Bifunctional protein FolD (287 aa).

NADP(+)-binding positions include 166–168 (GAS) and Ile232.

It belongs to the tetrahydrofolate dehydrogenase/cyclohydrolase family. As to quaternary structure, homodimer.

It catalyses the reaction (6R)-5,10-methylene-5,6,7,8-tetrahydrofolate + NADP(+) = (6R)-5,10-methenyltetrahydrofolate + NADPH. The enzyme catalyses (6R)-5,10-methenyltetrahydrofolate + H2O = (6R)-10-formyltetrahydrofolate + H(+). It participates in one-carbon metabolism; tetrahydrofolate interconversion. Its function is as follows. Catalyzes the oxidation of 5,10-methylenetetrahydrofolate to 5,10-methenyltetrahydrofolate and then the hydrolysis of 5,10-methenyltetrahydrofolate to 10-formyltetrahydrofolate. The protein is Bifunctional protein FolD of Pectobacterium carotovorum subsp. carotovorum (strain PC1).